The primary structure comprises 64 residues: Large ribosomal subunit protein bL35 (64 aa).

The protein belongs to the bacterial ribosomal protein bL35 family.

The polypeptide is Large ribosomal subunit protein bL35 (Pseudomonas entomophila (strain L48)).